A 357-amino-acid chain; its full sequence is MDLNEESAPSGVLFEEDVAEQEAKMANGGPKKGKKLEEPYRLEIVWFNVLWFVLLHAGALYGVYLIFASAKIYTTLYGFLLCELSLLSITAGVHRLWAHRAYKAKWPLRLTLMVLNLLAYQNSIYEWARDHRVHHKFSETNADPVNAKRGFFFSHVGWLLCRKHPEVRAKGGRIDLSDLERDPIVMFQKRHYYKLVPFVSFVIPTLIPMYFWGETLSNSWYVSTMFRYCLSLNLTWLVNSAAHMWGNKPYDKNINPVENLAVAIGSLGEGWHNFHHVFPWDYKTSELGNYSLNFTNAFIDLAVLLGLAYDLKTVPVSMIKTRVGRTGDGSHDVWGWGDKDLPKELADQTMIENRKTE.

Transmembrane regions (helical) follow at residues 49–69 and 72–92; these read VLWF…IFAS and IYTT…ITAG. Fe cation is bound by residues histidine 94, histidine 99, histidine 131, histidine 134, and histidine 135. A Histidine box-1 motif is present at residues 94–99; it reads HRLWAH. The short motif at 131 to 135 is the Histidine box-2 element; the sequence is HRVHH. 2 consecutive transmembrane segments (helical) span residues 195–215 and 223–245; these read LVPF…WGET and STMF…AHMW. Residues histidine 243, histidine 272, histidine 275, and histidine 276 each coordinate Fe cation. The Histidine box-3 signature appears at 272-276; that stretch reads HNFHH.

Belongs to the fatty acid desaturase type 1 family. Fe(2+) is required as a cofactor.

The protein localises to the membrane. The enzyme catalyses (9Z)-octadecenoyl-CoA + 2 Fe(II)-[cytochrome b5] + O2 + 2 H(+) = (9Z,12Z)-octadecadienoyl-CoA + 2 Fe(III)-[cytochrome b5] + 2 H2O. The catalysed reaction is (9Z)-hexadecenoyl-CoA + 2 Fe(II)-[cytochrome b5] + O2 + 2 H(+) = (9Z,12Z)-hexadecadienoyl-CoA + 2 Fe(III)-[cytochrome b5] + 2 H2O. It carries out the reaction hexadecanoyl-CoA + 2 Fe(II)-[cytochrome b5] + O2 + 2 H(+) = (9Z)-hexadecenoyl-CoA + 2 Fe(III)-[cytochrome b5] + 2 H2O. Functionally, catalyzes the formation of a Delta12 double bond, acting on monounsaturated fatty acyl substrates like palmitoleoyl-CoA ((9Z)-hexadecenoyl-CoA) and oleoyl-CoA ((9Z)-octadecenoyl-CoA) with higher desaturation activity on (9Z)-octadecenoyl-CoA than (9Z)-hexadecenoyl-CoA. Requires preexisting cis double bond at the Delta9 position of fatty acyls to be able to insert the Delta12 double bond. Delta12-desaturation of (9Z)-octadecenoyl-CoA in insects produces (9Z,12Z)-octadecadienoyl-CoA (linoleoyl-CoA) which may be used to supply precursors of crucial mediators of immunity and reproduction and other essential functions. Can also catalyze Delta9-desaturation on saturated fatty acyl substrates like palmitoyl-CoA (hexadecanoyl-CoA) but with lower efficiency. The sequence is that of Acyl-CoA Delta12-desaturase from Acheta domesticus (House cricket).